A 363-amino-acid chain; its full sequence is MSYGLLRPLLFTLDPERAHTLSIAALEALGHMPRGLARVARRYTAHDPRLAQDFWGLHFANPVGLAAGYDKDARATAALPALGFGFIEIGTVTPRPQPGNPRPRVFRYPAQQAVINRMGFPGEGAAAVARRLAALPGHPVPIGINLGKNKDTPLERAQDDYVAALELLFHYGDYLCINVSSPNTPGLRLLQGEEALRGLLKAVAAANQRLALQHQRPPLPLLLKIAPDLDNDDLNAIGSLALGTAPLVNGFIATNTTIERPASQPGLSESGGLSGAPLLQQSNAVIAQLYRATQGQVPIIGVGGILSAADAYAKILAGASLVQVYSGLIFRGPGLVREILEELPGLWLKDGYPDLAHARGSTA.

Residues 67–71 and Thr91 each bind FMN; that span reads AGYDK. Lys71 provides a ligand contact to substrate. Position 116–120 (116–120) interacts with substrate; it reads NRMGF. 2 residues coordinate FMN: Asn145 and Asn178. Asn178 serves as a coordination point for substrate. Ser181 functions as the Nucleophile in the catalytic mechanism. Asn183 contributes to the substrate binding site. The FMN site is built by Lys224 and Thr254. 255–256 is a substrate binding site; sequence NT. Residues Gly275, Gly304, and 325–326 contribute to the FMN site; that span reads YS.

The protein belongs to the dihydroorotate dehydrogenase family. Type 2 subfamily. Monomer. Requires FMN as cofactor.

It localises to the cell membrane. It carries out the reaction (S)-dihydroorotate + a quinone = orotate + a quinol. Its pathway is pyrimidine metabolism; UMP biosynthesis via de novo pathway; orotate from (S)-dihydroorotate (quinone route): step 1/1. Functionally, catalyzes the conversion of dihydroorotate to orotate with quinone as electron acceptor. In Acidithiobacillus ferrooxidans (strain ATCC 23270 / DSM 14882 / CIP 104768 / NCIMB 8455) (Ferrobacillus ferrooxidans (strain ATCC 23270)), this protein is Dihydroorotate dehydrogenase (quinone).